The following is a 260-amino-acid chain: Thiazole synthase (260 aa).

Lys96 functions as the Schiff-base intermediate with DXP in the catalytic mechanism. 1-deoxy-D-xylulose 5-phosphate contacts are provided by residues Gly157, 184-185, and 206-207; these read AG and NT.

The protein belongs to the ThiG family. As to quaternary structure, homotetramer. Forms heterodimers with either ThiH or ThiS.

It localises to the cytoplasm. It carries out the reaction [ThiS sulfur-carrier protein]-C-terminal-Gly-aminoethanethioate + 2-iminoacetate + 1-deoxy-D-xylulose 5-phosphate = [ThiS sulfur-carrier protein]-C-terminal Gly-Gly + 2-[(2R,5Z)-2-carboxy-4-methylthiazol-5(2H)-ylidene]ethyl phosphate + 2 H2O + H(+). The protein operates within cofactor biosynthesis; thiamine diphosphate biosynthesis. Functionally, catalyzes the rearrangement of 1-deoxy-D-xylulose 5-phosphate (DXP) to produce the thiazole phosphate moiety of thiamine. Sulfur is provided by the thiocarboxylate moiety of the carrier protein ThiS. In vitro, sulfur can be provided by H(2)S. The polypeptide is Thiazole synthase (Rhodopseudomonas palustris (strain BisB5)).